An 878-amino-acid polypeptide reads, in one-letter code: Bifunctional heparan sulfate N-deacetylase/N-sulfotransferase 1 (878 aa).

Over methionine 1 to glutamine 17 the chain is Cytoplasmic. Residues methionine 1–phenylalanine 169 are sufficient for localization to Golgi membrane. Residues leucine 18–leucine 38 traverse the membrane as a helical; Signal-anchor for type II membrane protein segment. Over tyrosine 39–arginine 878 the chain is Lumenal. The heparan sulfate N-deacetylase 1 stretch occupies residues glycine 40 to glutamate 594. Positions proline 47–lysine 71 are disordered. Residues asparagine 231, asparagine 347, and asparagine 397 are each glycosylated (N-linked (GlcNAc...) asparagine). The tract at residues lysine 595–arginine 878 is heparan sulfate N-sulfotransferase 1. Lysine 610 (for sulfotransferase activity) is an active-site residue. Adenosine 3',5'-bisphosphate is bound at residue lysine 610–threonine 614. An N-linked (GlcNAc...) asparagine glycan is attached at asparagine 663. Adenosine 3',5'-bisphosphate-binding residues include serine 708 and tryptophan 813. Cysteine 814 and cysteine 824 form a disulfide bridge. An adenosine 3',5'-bisphosphate-binding site is contributed by lysine 829 to tyrosine 833.

This sequence belongs to the sulfotransferase 1 family. NDST subfamily. Monomer.

It is found in the golgi apparatus membrane. It localises to the golgi apparatus. Its subcellular location is the trans-Golgi network membrane. It carries out the reaction alpha-D-glucosaminyl-[heparan sulfate](n) + 3'-phosphoadenylyl sulfate = N-sulfo-alpha-D-glucosaminyl-[heparan sulfate](n) + adenosine 3',5'-bisphosphate + 2 H(+). The protein operates within glycan metabolism; heparan sulfate biosynthesis. It functions in the pathway glycan metabolism; heparin biosynthesis. Its function is as follows. Essential bifunctional enzyme that catalyzes both the N-deacetylation and the N-sulfation of glucosamine (GlcNAc) of the glycosaminoglycan in heparan sulfate. Modifies the GlcNAc-GlcA disaccharide repeating sugar backbone to make N-sulfated heparosan, a prerequisite substrate for later modifications in heparin biosynthesis. Plays a role in determining the extent and pattern of sulfation of heparan sulfate. In Xenopus tropicalis (Western clawed frog), this protein is Bifunctional heparan sulfate N-deacetylase/N-sulfotransferase 1 (ndst1).